The sequence spans 356 residues: Protein MGF 360-3L (356 aa).

The stretch at K61–L93 is one ANK repeat.

Belongs to the asfivirus MGF 360 family.

Functionally, plays a role in virus cell tropism, and may be required for efficient virus replication in macrophages. This African swine fever virus (isolate Warthog/Namibia/Wart80/1980) (ASFV) protein is Protein MGF 360-3L.